Here is a 447-residue protein sequence, read N- to C-terminus: D-ribitol-5-phosphate cytidylyltransferase (447 aa).

This sequence belongs to the IspD/TarI cytidylyltransferase family. IspD subfamily. In terms of assembly, homodimer.

It localises to the cytoplasm. Its subcellular location is the cytosol. It catalyses the reaction D-ribitol 5-phosphate + CTP + H(+) = CDP-L-ribitol + diphosphate. It carries out the reaction D-ribose 5-phosphate + CTP + H(+) = CDP-D-ribose + diphosphate. The catalysed reaction is D-ribulose 5-phosphate + CTP + H(+) = CDP-D-ribulose + diphosphate. Its pathway is protein modification; protein glycosylation. Cytidylyltransferase required for protein O-linked mannosylation. Catalyzes the formation of CDP-ribitol nucleotide sugar from D-ribitol 5-phosphate. CDP-ribitol is a substrate of FKTN during the biosynthesis of the phosphorylated O-mannosyl trisaccharide (N-acetylgalactosamine-beta-3-N-acetylglucosamine-beta-4-(phosphate-6-)mannose), a carbohydrate structure present in alpha-dystroglycan (DAG1), which is required for binding laminin G-like domain-containing extracellular proteins with high affinity. Shows activity toward other pentose phosphate sugars and mediates formation of CDP-ribulose or CDP-ribose using CTP and ribulose-5-phosphate or ribose-5-phosphate, respectively. Not involved in dolichol production. The polypeptide is D-ribitol-5-phosphate cytidylyltransferase (Crppa) (Mus musculus (Mouse)).